Here is a 206-residue protein sequence, read N- to C-terminus: Guanylate kinase (206 aa).

Positions 6–185 constitute a Guanylate kinase-like domain; that stretch reads GAILVLSGPS…AAKTLRIIAD (180 aa). 13 to 20 is an ATP binding site; it reads GPSGAGKS.

It belongs to the guanylate kinase family.

The protein localises to the cytoplasm. It catalyses the reaction GMP + ATP = GDP + ADP. Its function is as follows. Essential for recycling GMP and indirectly, cGMP. The polypeptide is Guanylate kinase (Sulfurimonas denitrificans (strain ATCC 33889 / DSM 1251) (Thiomicrospira denitrificans (strain ATCC 33889 / DSM 1251))).